The sequence spans 169 residues: uncharacterized protein (169 aa).

Transmembrane regions (helical) follow at residues 10-30 (NVHM…FKLI) and 149-169 (IPLA…LLIP).

The protein localises to the membrane. This is an uncharacterized protein from Dictyostelium discoideum (Social amoeba).